Here is a 448-residue protein sequence, read N- to C-terminus: Tryptophan dimethylallyltransferase 1 (448 aa).

L-tryptophan-binding positions include 80-81 and glutamate 89; that span reads IL. Residues arginine 100, lysine 186, and tyrosine 188 each contribute to the substrate site. 2 residues coordinate L-tryptophan: tyrosine 190 and arginine 249. Substrate contacts are provided by arginine 262, lysine 264, tyrosine 266, glutamine 348, tyrosine 350, tyrosine 414, and tyrosine 418.

This sequence belongs to the tryptophan dimethylallyltransferase family. In terms of assembly, homodimer.

The catalysed reaction is L-tryptophan + dimethylallyl diphosphate = 4-(3-methylbut-2-enyl)-L-tryptophan + diphosphate. It functions in the pathway alkaloid biosynthesis; ergot alkaloid biosynthesis. Functionally, tryptophan dimethylallyltransferase; part of the gene cluster that mediates the biosynthesis of fungal ergot alkaloid. DmaW catalyzes the first step of ergot alkaloid biosynthesis by condensing dimethylallyl diphosphate (DMAP) and tryptophan to form 4-dimethylallyl-L-tryptophan. The second step is catalyzed by the methyltransferase easF that methylates 4-dimethylallyl-L-tryptophan in the presence of S-adenosyl-L-methionine, resulting in the formation of 4-dimethylallyl-L-abrine. The catalase easC and the FAD-dependent oxidoreductase easE then transform 4-dimethylallyl-L-abrine to chanoclavine-I which is further oxidized by easD in the presence of NAD(+), resulting in the formation of chanoclavine-I aldehyde. Agroclavine dehydrogenase easG then mediates the conversion of chanoclavine-I aldehyde to agroclavine via a non-enzymatic adduct reaction: the substrate is an iminium intermediate that is formed spontaneously from chanoclavine-I aldehyde in the presence of glutathione. The presence of easA is not required to complete this reaction. Further conversion of agroclavine to paspalic acid is a two-step process involving oxidation of agroclavine to elymoclavine and of elymoclavine to paspalic acid, the second step being performed by the elymoclavine oxidase cloA. Paspalic acid is then further converted to D-lysergic acid. Ergopeptines are assembled from D-lysergic acid and three different amino acids by the D-lysergyl-peptide-synthetases composed each of a monomudular and a trimodular nonribosomal peptide synthetase subunit. LpsB and lpsC encode the monomodular subunits responsible for D-lysergic acid activation and incorporation into the ergopeptine backbone. LpsA1 and A2 subunits encode the trimodular nonribosomal peptide synthetase assembling the tripeptide portion of ergopeptines. LpsA1 is responsible for formation of the major ergopeptine, ergotamine, and lpsA2 for alpha-ergocryptine, the minor ergopeptine of the total alkaloid mixture elaborated by C.purpurea. D-lysergyl-tripeptides are assembled by the nonribosomal peptide synthetases and released as N-(D-lysergyl-aminoacyl)-lactams. Cyclolization of the D-lysergyl-tripeptides is performed by the Fe(2+)/2-ketoglutarate-dependent dioxygenase easH which introduces a hydroxyl group into N-(D-lysergyl-aminoacyl)-lactam at alpha-C of the aminoacyl residue followed by spontaneous condensation with the terminal lactam carbonyl group. This chain is Tryptophan dimethylallyltransferase 1, found in Claviceps purpurea (strain 20.1) (Ergot fungus).